A 131-amino-acid polypeptide reads, in one-letter code: Small ribosomal subunit protein uS8 (131 aa).

It belongs to the universal ribosomal protein uS8 family. Part of the 30S ribosomal subunit. Contacts proteins S5 and S12.

One of the primary rRNA binding proteins, it binds directly to 16S rRNA central domain where it helps coordinate assembly of the platform of the 30S subunit. The chain is Small ribosomal subunit protein uS8 from Bordetella petrii (strain ATCC BAA-461 / DSM 12804 / CCUG 43448).